The following is a 491-amino-acid chain: Nucleotidyltransferase MB21D2 (491 aa).

Residues 431–442 (RGSTTSIPSPQS) are compositionally biased toward polar residues. Positions 431-452 (RGSTTSIPSPQSDGGDPNQPDD) are disordered. Threonine 435 bears the Phosphothreonine mark. A phosphoserine mark is found at serine 436, serine 439, and serine 442.

It belongs to the mab-21 family.

Probable nucleotidyltransferase that catalyzes the formation of cyclic dinucleotide second messenger in response to some unknown stimulus. The sequence is that of Nucleotidyltransferase MB21D2 from Homo sapiens (Human).